The following is a 284-amino-acid chain: Hypersensitive-induced response protein 1 (284 aa).

The N-myristoyl glycine moiety is linked to residue G2.

As to quaternary structure, interacts with LRR1.

Its subcellular location is the cell membrane. Functionally, positive regulator of hypersensitive response (HR)-like cell death. May be involved in potassium ion channel regulation. The chain is Hypersensitive-induced response protein 1 from Oryza sativa subsp. japonica (Rice).